The sequence spans 517 residues: Perilipin-1 (517 aa).

The residue at position 81 (S81) is a Phosphoserine. Residue T85 is modified to Phosphothreonine. S126, S130, S132, S137, and S174 each carry phosphoserine. The segment at 195-216 (DKESAPSSGRQRTQKAPKAKPS) is disordered. T223, T298, and T300 each carry phosphothreonine. The tract at residues 286–320 (LAASQDESHDDQTDTEGEETDDEEEEEESEAEENV) is disordered. Positions 290–321 (QDESHDDQTDTEGEETDDEEEEEESEAEENVL) are required for interaction with CIDEC. Positions 298–318 (TDTEGEETDDEEEEEESEAEE) are enriched in acidic residues. S314, S384, S386, S410, S433, S439, S460, S492, and S494 each carry phosphoserine. The tract at residues 425 to 490 (SAEAERKGSG…AMPREKPARR (66 aa)) is disordered.

Belongs to the perilipin family. Interacts with ABHD5. Interacts with CIDEC. Interacts with AQP7. Major cAMP-dependent protein kinase-substrate in adipocytes, also dephosphorylated by PP1. When phosphorylated, may be maximally sensitive to HSL and when unphosphorylated, may play a role in the inhibition of lipolysis, by acting as a barrier in lipid droplet.

It localises to the endoplasmic reticulum. The protein localises to the lipid droplet. Modulator of adipocyte lipid metabolism. Coats lipid storage droplets to protect them from breakdown by hormone-sensitive lipase (HSL). Its absence may result in leanness. Plays a role in unilocular lipid droplet formation by activating CIDEC. Their interaction promotes lipid droplet enlargement and directional net neutral lipid transfer. May modulate lipolysis and triglyceride levels. This is Perilipin-1 (Plin1) from Mus musculus (Mouse).